Reading from the N-terminus, the 202-residue chain is Putative 3-methyladenine DNA glycosylase (202 aa).

It belongs to the DNA glycosylase MPG family.

This Staphylococcus aureus (strain bovine RF122 / ET3-1) protein is Putative 3-methyladenine DNA glycosylase.